Reading from the N-terminus, the 668-residue chain is NADH-ubiquinone oxidoreductase chain 5 (668 aa).

18 helical membrane-spanning segments follow: residues 1-21 (MYIINLILPLIGSIITGLFGH), 31-51 (IAVGCMMLTALSSLYIGYEIL), 81-101 (LTSIMIIVITCISSMVHLYSM), 111-131 (TRFFSYLSLFTFFMMLLVTAD), 133-153 (FVQLFFGWEGVGIMSYLLINF), 178-198 (LFFGILLVFLVFKSVDFSVIF), 211-231 (LLGYEVNAITLIGSFIVIGVV), 251-271 (TPVSALLHAATMVTAGVFLVL), 283-303 (ILNILTIIGALTTLFATTIGI), 311-331 (VIAYSTCSQLGYMIFACGLLN), 339-359 (LTTHAFFKALLFLSAGSVIHG), 375-395 (LMPLTYQCMLIGTLALTGFPF), 421-441 (AIIGYVAAFGTTFYSFRLLIL), 462-482 (TNMVIPLVILAICSIFIGYLT), 519-539 (LLPLFAFIYGVLTPVLFYFNL), 566-586 (FDFLSRVLIAVPFFHLSYDVM), 629-649 (IVQAILLIIFVGIFSFMIGFL), and 650-668 (YVELFVILGALYLCLPKIK).

This sequence belongs to the complex I subunit 5 family.

It localises to the mitochondrion inner membrane. It carries out the reaction a ubiquinone + NADH + 5 H(+)(in) = a ubiquinol + NAD(+) + 4 H(+)(out). Core subunit of the mitochondrial membrane respiratory chain NADH dehydrogenase (Complex I) that is believed to belong to the minimal assembly required for catalysis. Complex I functions in the transfer of electrons from NADH to the respiratory chain. The immediate electron acceptor for the enzyme is believed to be ubiquinone. This Dictyostelium citrinum (Slime mold) protein is NADH-ubiquinone oxidoreductase chain 5 (nad5).